We begin with the raw amino-acid sequence, 422 residues long: Vitamin D3 receptor B (422 aa).

Positions 20-95 (PRICGVCGDK…IGMMKEFILT (76 aa)) form a DNA-binding region, nuclear receptor. Positions 23, 26, 40, 43, 59, 65, 75, and 78 each coordinate Zn(2+). 2 consecutive NR C4-type zinc fingers follow at residues 23–43 (CGVC…CEGC) and 59–78 (CPFN…CQAC). Residues 96–125 (DEEVQRKKELIQRRKDEEAHREAQKPRLSD) are hinge. The disordered stretch occupies residues 106–128 (IQRRKDEEAHREAQKPRLSDEQR). Residues 126–418 (EQRNIIDTLV…LTPLVLEVFG (293 aa)) form the NR LBD domain. Tyr142 provides a ligand contact to calcitriol. The segment at 145 to 190 (SYSDFSRFRPPVREGPVTRSASRAASLHSLSDASSDSFSHSPESGD) is disordered. Positions 163–185 (RSASRAASLHSLSDASSDSFSHS) are enriched in low complexity. A calcitriol-binding site is contributed by Ser234. Residues 243–261 (KMIPGFRELTAEDQIALLK) are interaction with coactivator LXXLL motif. Residues Arg271, Ser275, His302, and His392 each coordinate calcitriol. A 9aaTAD motif is present at residues 411 to 419 (PLVLEVFGG).

The protein belongs to the nuclear hormone receptor family. Homodimer in the absence of bound vitamin D3. Heterodimer with RXRA after vitamin D3 binding. Interacts with ncoa1 and possibly other coactivators, leading to a strong increase of transcription of target genes. Detected in embryo 24 to 48 hours after fertilization, and in intestinal bulb.

The protein localises to the nucleus. It localises to the cytoplasm. Functionally, nuclear receptor for calcitriol, the active form of vitamin D3 which mediates the action of this vitamin on cells. Enters the nucleus upon vitamin D3 binding where it forms heterodimers with the retinoid X receptor/RXR. The VDR-RXR heterodimers bind to specific response elements on DNA and activate the transcription of vitamin D3-responsive target genes. Recruited to promoters via its interaction with BAZ1B/WSTF which mediates the interaction with acetylated histones, an essential step for VDR-promoter association. Plays a central role in calcium homeostasis. The protein is Vitamin D3 receptor B (vdrb) of Danio rerio (Zebrafish).